A 309-amino-acid polypeptide reads, in one-letter code: Taste receptor type 2 member 31 (309 aa).

The Extracellular segment spans residues 1–2 (MT). The helical transmembrane segment at 3–23 (TFIPIIFSSLVMVMFVTGNFA) threads the bilayer. The Cytoplasmic portion of the chain corresponds to 24 to 55 (NGFIALVNSIESVKRQKISYADQILTALAVSR). The chain crosses the membrane as a helical span at residues 56–76 (IGLLWVLLLNWYSTVLNPAFY). At 77–100 (SVEVRTTAYNVWAVTGHFSNWLAT) the chain is on the extracellular side. Residues 101-121 (SLSIFYLLKIANFSNLIFLHL) form a helical membrane-spanning segment. Residues 122–126 (KRRVK) are Cytoplasmic-facing. The helical transmembrane segment at 127-147 (SVILVMLLGPLLFLACQLFVI) threads the bilayer. The Extracellular portion of the chain corresponds to 148 to 181 (NMKEIVQTKEYEGNXTWKIKLRSAVYLSDATVTT). Residue Asn161 is glycosylated (N-linked (GlcNAc...) asparagine). A helical transmembrane segment spans residues 182–202 (LGNLVPFTLTLLCFLLLICSL). Over 203 to 229 (CKHLKKMQLHGKGSQDPSMKVHIKALQ) the chain is Cytoplasmic. The helical transmembrane segment at 230-250 (TVTSFLLLCAIYFLSIMISVW) threads the bilayer. At 251-259 (SLGSLKNKP) the chain is on the extracellular side. Residues 260–280 (VFMFCKAMRFSYPSIHPFILI) traverse the membrane as a helical segment. Topologically, residues 281 to 309 (WGNKKLKQTFLSVLQQVRYWVKGEKPSSP) are cytoplasmic.

Belongs to the G-protein coupled receptor T2R family.

It localises to the membrane. Receptor that may play a role in the perception of bitterness and is gustducin-linked. May play a role in sensing the chemical composition of the gastrointestinal content. The activity of this receptor may stimulate alpha gustducin, mediate PLC-beta-2 activation and lead to the gating of TRPM5. The chain is Taste receptor type 2 member 31 (TAS2R31) from Gorilla gorilla gorilla (Western lowland gorilla).